A 146-amino-acid chain; its full sequence is Large ribosomal subunit protein uL15 (146 aa).

The interval 1-58 (MKLNELSPPKGARTARKRKGRGPGSGLGKTAGKGHKGQKARSGGGVRPGFEGGQMPVH) is disordered. Gly residues-rich tracts occupy residues 22 to 31 (GPGSGLGKTA) and 42 to 52 (SGGGVRPGFEG).

Belongs to the universal ribosomal protein uL15 family. As to quaternary structure, part of the 50S ribosomal subunit.

Binds to the 23S rRNA. The polypeptide is Large ribosomal subunit protein uL15 (Desulfatibacillum aliphaticivorans).